A 309-amino-acid polypeptide reads, in one-letter code: Tagatose-6-phosphate kinase (309 aa).

Belongs to the carbohydrate kinase PfkB family. LacC subfamily.

It carries out the reaction D-tagatofuranose 6-phosphate + ATP = D-tagatofuranose 1,6-bisphosphate + ADP + H(+). Its pathway is carbohydrate metabolism; D-tagatose 6-phosphate degradation; D-glyceraldehyde 3-phosphate and glycerone phosphate from D-tagatose 6-phosphate: step 1/2. The polypeptide is Tagatose-6-phosphate kinase (Streptococcus sanguinis (strain SK36)).